Here is a 208-residue protein sequence, read N- to C-terminus: Glutathione S-transferase P (208 aa).

One can recognise a GST N-terminal domain in the interval 1-78; it reads MTLKLTYFDI…HLARLNGLNG (78 aa). Residues Tyr-7, Trp-38, Lys-42, 49–50, and 62–63 each bind glutathione; these read QV and QS. The 123-residue stretch at 80–202 folds into the GST C-terminal domain; the sequence is NETETTFIDM…NKRAAINPPV (123 aa).

Belongs to the GST superfamily. Pi family. In terms of assembly, homodimer. In terms of tissue distribution, expressed in dopaminergic (DA) neuron (at protein levels).

It catalyses the reaction RX + glutathione = an S-substituted glutathione + a halide anion + H(+). In terms of biological role, conjugation of reduced glutathione to a wide number of exogenous and endogenous hydrophobic electrophiles. Prevents dopaminergic CEP neuron degeneration in response to Mn(2+). This Caenorhabditis elegans protein is Glutathione S-transferase P (gst-1).